Reading from the N-terminus, the 901-residue chain is Protein translocase subunit SecA (901 aa).

Residues glutamine 87, 105-109 (GEGKT), and aspartate 512 each bind ATP. Residues 859-901 (HQDDDSAAAAALAAQTGERKVGRNDPCPCGSGKKYKQCHGRLQ) form a disordered region. Zn(2+) contacts are provided by cysteine 885, cysteine 887, cysteine 896, and histidine 897. Residues 891-901 (KKYKQCHGRLQ) are compositionally biased toward basic residues.

Belongs to the SecA family. Monomer and homodimer. Part of the essential Sec protein translocation apparatus which comprises SecA, SecYEG and auxiliary proteins SecDF-YajC and YidC. The cofactor is Zn(2+).

The protein localises to the cell inner membrane. The protein resides in the cytoplasm. The enzyme catalyses ATP + H2O + cellular proteinSide 1 = ADP + phosphate + cellular proteinSide 2.. In terms of biological role, part of the Sec protein translocase complex. Interacts with the SecYEG preprotein conducting channel. Has a central role in coupling the hydrolysis of ATP to the transfer of proteins into and across the cell membrane, serving both as a receptor for the preprotein-SecB complex and as an ATP-driven molecular motor driving the stepwise translocation of polypeptide chains across the membrane. This is Protein translocase subunit SecA from Shigella dysenteriae serotype 1 (strain Sd197).